The chain runs to 300 residues: 17-beta-hydroxysteroid dehydrogenase 13 (300 aa).

The signal sequence occupies residues 1-19; the sequence is MNIILEILLLLITIIYSYL. Ser33 is modified (phosphoserine). 40–67 is a binding site for NAD(+); that stretch reads LITGAGHGIGRQTTYEFAKRQSILVLWD. Ser172 lines the substrate pocket. The active-site Proton acceptor is the Tyr185. Lys189 contributes to the NAD(+) binding site.

This sequence belongs to the short-chain dehydrogenases/reductases (SDR) family. In terms of tissue distribution, highly expressed in the liver. Also detected in ovary, bone marrow, kidney, brain, lung, skeletal muscle, bladder and testis.

The protein resides in the lipid droplet. It localises to the endoplasmic reticulum. It is found in the cytoplasm. It catalyses the reaction 17beta-estradiol + NAD(+) = estrone + NADH + H(+). It carries out the reaction all-trans-retinol + NAD(+) = all-trans-retinal + NADH + H(+). The enzyme catalyses all-trans-retinal + NAD(+) + H2O = all-trans-retinoate + NADH + 2 H(+). Functionally, plays a pivotal role in hepatic lipid metabolism. In vitro, it catalyzes the oxidation of a variety of lipid substrates, including 17beta-estradiol, retinol, retinal, and leukotriene B4. In terms of biological role, has retinol/retinal dehydrogenase activity in vitro. Its function is as follows. Does not have retinol/retinal dehydrogenase activity in vitro. The sequence is that of 17-beta-hydroxysteroid dehydrogenase 13 from Homo sapiens (Human).